We begin with the raw amino-acid sequence, 715 residues long: DNA ligase (715 aa).

NAD(+) is bound by residues aspartate 47–aspartate 51, serine 96–leucine 97, and glutamate 128. The N6-AMP-lysine intermediate role is filled by lysine 130. Positions 151, 188, 306, and 330 each coordinate NAD(+). The Zn(2+) site is built by cysteine 435, cysteine 438, cysteine 453, and cysteine 459. The 79-residue stretch at arginine 637 to asparagine 715 folds into the BRCT domain.

Belongs to the NAD-dependent DNA ligase family. LigA subfamily. It depends on Mg(2+) as a cofactor. Mn(2+) is required as a cofactor.

It carries out the reaction NAD(+) + (deoxyribonucleotide)n-3'-hydroxyl + 5'-phospho-(deoxyribonucleotide)m = (deoxyribonucleotide)n+m + AMP + beta-nicotinamide D-nucleotide.. DNA ligase that catalyzes the formation of phosphodiester linkages between 5'-phosphoryl and 3'-hydroxyl groups in double-stranded DNA using NAD as a coenzyme and as the energy source for the reaction. It is essential for DNA replication and repair of damaged DNA. This is DNA ligase from Rhodopseudomonas palustris (strain TIE-1).